The sequence spans 95 residues: Aspartyl/glutamyl-tRNA(Asn/Gln) amidotransferase subunit C (95 aa).

Belongs to the GatC family. As to quaternary structure, heterotrimer of A, B and C subunits.

It carries out the reaction L-glutamyl-tRNA(Gln) + L-glutamine + ATP + H2O = L-glutaminyl-tRNA(Gln) + L-glutamate + ADP + phosphate + H(+). It catalyses the reaction L-aspartyl-tRNA(Asn) + L-glutamine + ATP + H2O = L-asparaginyl-tRNA(Asn) + L-glutamate + ADP + phosphate + 2 H(+). In terms of biological role, allows the formation of correctly charged Asn-tRNA(Asn) or Gln-tRNA(Gln) through the transamidation of misacylated Asp-tRNA(Asn) or Glu-tRNA(Gln) in organisms which lack either or both of asparaginyl-tRNA or glutaminyl-tRNA synthetases. The reaction takes place in the presence of glutamine and ATP through an activated phospho-Asp-tRNA(Asn) or phospho-Glu-tRNA(Gln). In Gluconacetobacter diazotrophicus (strain ATCC 49037 / DSM 5601 / CCUG 37298 / CIP 103539 / LMG 7603 / PAl5), this protein is Aspartyl/glutamyl-tRNA(Asn/Gln) amidotransferase subunit C.